We begin with the raw amino-acid sequence, 563 residues long: Type 2 DNA topoisomerase 6 subunit B (563 aa).

Residues Asn46, Asp78, 99-100 (TK), 109-116 (GQQGIGIS), and Lys471 each bind ATP.

Belongs to the TOP6B family. As to quaternary structure, homodimer. Heterotetramer of two Top6A and two Top6B chains.

The enzyme catalyses ATP-dependent breakage, passage and rejoining of double-stranded DNA.. Relaxes both positive and negative superturns and exhibits a strong decatenase activity. This chain is Type 2 DNA topoisomerase 6 subunit B, found in Thermococcus onnurineus (strain NA1).